The primary structure comprises 734 residues: MADKYIVEEAEALAKRALHSPIAQATPIYEQLLSLYPTSARFWKQYVEAQMAVNNDDATKQIFSRCLLTCLQVPLWQCYIRFIRKVYDKKGAEGQEETTKAFEFMLNYIGTDIASGPIWTEYIAFLKSLPALNLNEDLHRKTALRKVYHRAILTPTHHVEQLWKDYENFENTVNRQLAKGLVNEYQPKFNSARAVYRERKKYIEEIDWNMLAVPPTGTSKEETQWVAWKKFLSFEKGNPQRIDTASSTKRIIYAYEQCLMCLYHYPDVWYDYAEWHVKSGSTDAAIKVFQRALKAIPDSEMLKYAFAEMEESRGAIQSAKKLYENILGASTNSLAHIQYLRFLRRAEGVEAARKYFLDARKSPSCTYHVYIAFATMAFCIDKEPKVAHNIFEEGLKLYMSEPVYILKYADFLTRLNDDRNIRALFERALSTLPVEDSAEVWKRFIQFEQTYGDLASILKVEQRMKEALSGKGEEGSSPPESSLQDVVSRYSYMDLWPCTSNDLDHLARQELLVKNLNKKAGKTNLPHVPAAIGSVASSSKVVYPDTSQMVVQDPTKKSEFASSANPVAASASNTFPSTVTATATHGSASTFDEIPKTTPPALVAFLANLPIVDGPTPNVDVVLSICLQSDFPTGQTVKQSFAAKGNPPSQNDPSGPTRGVSQRLPRDRRATKRKDSDRQEEDDTATVQSQPLPTDVFRLRQMRKARGIATSSQTPTGSTSYGSAFSGELSGSTG.

12 HAT repeats span residues 20-52, 54-85, 93-128, 139-172, 198-237, 246-278, 280-312, 314-345, 347-379, 382-414, 416-450, and 474-505; these read SPIAQATPIYEQLLSLYPTSARFWKQYVEAQMA, NNDDATKQIFSRCLLTCLQVPLWQCYIRFIRK, EGQEETTKAFEFMLNYIGTDIASGPIWTEYIAFLKS, HRKTALRKVYHRAILTPTHHVEQLWKDYENFENT, ERKKYIEEIDWNMLAVPPTGTSKEETQWVAWKKFLSFEKG, SSTKRIIYAYEQCLMCLYHYPDVWYDYAEWHVK, GSTDAAIKVFQRALKAIPDSEMLKYAFAEMEES, GAIQSAKKLYENILGASTNSLAHIQYLRFLRR, EGVEAARKYFLDARKSPSCTYHVYIAFATMAFC, KEPKVAHNIFEEGLKLYMSEPVYILKYADFLTR, NDDRNIRALFERALSTLPVEDSAEVWKRFIQFEQT, and EGSSPPESSLQDVVSRYSYMDLWPCTSNDLDH. The disordered stretch occupies residues 637 to 734; that stretch reads VKQSFAAKGN…FSGELSGSTG (98 aa). Basic and acidic residues predominate over residues 664-677; sequence LPRDRRATKRKDSD. Residues 709–734 show a composition bias toward polar residues; it reads ATSSQTPTGSTSYGSAFSGELSGSTG.

In terms of assembly, homodimer. Belongs to the CSTF complex. Forms a complex with cleavage and polyadenylation specificity factor (CPSF) subunits CPSF30, CSTF64, PCFS1, PCFS5 and FIPS5.

The protein resides in the nucleus. In terms of biological role, one of the multiple factors required for polyadenylation and 3'-end cleavage of pre-mRNAs. Required for the targeted 3' processing of antisense transcripts that triggers transcriptional silencing of the corresponding sense gene. This chain is Cleavage stimulation factor subunit 77, found in Arabidopsis thaliana (Mouse-ear cress).